A 198-amino-acid polypeptide reads, in one-letter code: 8-oxoguanine DNA glycosylase/AP lyase (198 aa).

Active-site residues include K122 and D140.

This sequence belongs to the type-2 OGG1 family. As to quaternary structure, monomer.

It carries out the reaction 2'-deoxyribonucleotide-(2'-deoxyribose 5'-phosphate)-2'-deoxyribonucleotide-DNA = a 3'-end 2'-deoxyribonucleotide-(2,3-dehydro-2,3-deoxyribose 5'-phosphate)-DNA + a 5'-end 5'-phospho-2'-deoxyribonucleoside-DNA + H(+). In terms of biological role, catalyzes the excision of an oxidatively damaged form of guanine (7,8-dihydro-8-oxoguanine = 8-oxoG) from DNA. Also cleaves the DNA backbone at apurinic/apyrimidinic sites (AP sites). Efficiently cleaves oligomers containing 8-oxoG:C and 8-oxoG:G base pairs, and is less effective on oligomers containing 8-oxoG:T and 8-oxoG:A mispairs. In Archaeoglobus fulgidus (strain ATCC 49558 / DSM 4304 / JCM 9628 / NBRC 100126 / VC-16), this protein is 8-oxoguanine DNA glycosylase/AP lyase.